A 279-amino-acid chain; its full sequence is Putative F-box protein At1g50880 (279 aa).

One can recognise an F-box domain in the interval S19–Q69.

This chain is Putative F-box protein At1g50880, found in Arabidopsis thaliana (Mouse-ear cress).